The chain runs to 297 residues: TATA-box-binding protein (297 aa).

Positions 52–116 (EEQQRQQQQA…ITPATPASES (65 aa)) are disordered. Composition is skewed to low complexity over residues 56–78 (RQQQ…QTPQ) and 104–114 (MTPITPATPAS). Tandem repeats lie at residues 123–199 (LQNI…ARVV) and 213–290 (IQNM…YPIL).

The protein belongs to the TBP family. Belongs to the TFIID complex together with the TBP-associated factors (TAFs). Binds DNA as monomer. The N-terminal domain is extensively phosphorylated.

It is found in the nucleus. Its function is as follows. General transcription factor that functions at the core of the DNA-binding multiprotein factor TFIID. Binding of TFIID to the TATA box is the initial transcriptional step of the pre-initiation complex (PIC), playing a role in the activation of eukaryotic genes transcribed by RNA polymerase II. Members of the TBP family are differentially required to regulate transcription and development during early embryogenesis. Binds to the promoters of select genes. This chain is TATA-box-binding protein, found in Xenopus tropicalis (Western clawed frog).